Consider the following 126-residue polypeptide: uncharacterized protein (126 aa).

This is an uncharacterized protein from Saccharomyces cerevisiae (strain ATCC 204508 / S288c) (Baker's yeast).